Consider the following 133-residue polypeptide: Ribosome-binding factor A (133 aa).

This sequence belongs to the RbfA family. As to quaternary structure, monomer. Binds 30S ribosomal subunits, but not 50S ribosomal subunits or 70S ribosomes.

The protein localises to the cytoplasm. Functionally, one of several proteins that assist in the late maturation steps of the functional core of the 30S ribosomal subunit. Associates with free 30S ribosomal subunits (but not with 30S subunits that are part of 70S ribosomes or polysomes). Required for efficient processing of 16S rRNA. May interact with the 5'-terminal helix region of 16S rRNA. The protein is Ribosome-binding factor A of Shigella boydii serotype 18 (strain CDC 3083-94 / BS512).